Consider the following 521-residue polypeptide: MSKTFEYVICGGGTVGCVLASRLSLAGHSVLLIEAGPEDYNDRIMSPVAAPHLHGTEWEHNLMTTKQPGLGNRSVPNYAGKLLSGSSGINYGLWTRGHSVDYDSWAKAVGDERWNYANMLKYFQKTETQISTTAAARIYPLREPIRNAMVAAGLDYNPDPNGGNPLGFGPFTENWKNALRQPASKAYDLSKATVLTNSVIARVDFDDPKTTATGVTLTDGTQYTATSEVLVTCGALKTPQLLMLSGIGPQQHLAQHNIPIIADLPVGENYHDKISATFFWKLRHPEKGYALGSPRFNKPEFRHGNPIEWVATVPTPHAELIKATQQDQIDSDDPYLQKPRGNVEVMVAYAPIAGGGSEFRLPMDGTHISSPVVLLLPTSRGRITLASADPTADPVLDPGYLDTETDRAAIRAGMRVALRLMETESAKEVIDGETPPPGHEPLTSACSDADLDRRVQIVGSSFFQNGGTAAMGTVVDTQCRVKGVRNLRVCDASVLSVPLAGHYQAPMYALGEAVADMLLAQ.

FAD-binding positions include Thr-14–Val-15, Glu-34–Ala-35, Leu-82, Asn-90–Leu-93, Ala-492, and Tyr-503–Gln-504.

It belongs to the GMC oxidoreductase family. Requires FAD as cofactor.

It functions in the pathway secondary metabolite biosynthesis. GMC-type oxidoreductase; part of the gene cluster that mediates the biosynthesis of aculins. The pathway begins with the synthesis of 6-methylsalicylic acid by the polyketide synthase (PKS) acuA via condensation of acetate and malonate units. The 6-methylsalicylic acid decarboxylase acuB then catalyzes the decarboxylation of 6-methylsalicylic acid to yield m-cresol (also known as 3-methylphenol). These first reactions occur in the cytosol. The intermediate m-cresol is then transported into the endoplasmic reticulum where the cytochrome P450 monooxygenase acuC converts it to m-hydroxybenzyl alcohol, which is further converted to gentisyl alcohol by the cytochrome P450 monooxygenase acuD. Gentisyl alcohol is further oxidized by the oxidoreductase acuE that probably catalyzes hydroxylation of the aromatic ring. The aromatic system might then be opened by oxidation through a Baeyer-Villiger type of oxidation, which could be catalyzed by acuF, with the carboxylic acid at C-1 subsequently reduced to an aldehyde by acuG. Subsequently, a hemiacetal is formed, before the dehydrogenase acuH would reduce the double bond between C-4 and C-6. Finally, keto-enol tautomerism results in formation of aculinic acid, which exists as two diastereomers (both R/S configurations at C-1) by non-enzymatic hemiacetal formation. The carboxypeptidase acuI could be involved in the linking of aculinic acid to an aculene A moiety produced by the aculene biosynthesis cluster and which leads to the production of aculin A. AcuI may also be involved in the attachment of proline to aculinic acid to form epi-aculins A and B. In Aspergillus aculeatus (strain ATCC 16872 / CBS 172.66 / WB 5094), this protein is GMC-type oxidoreductase acuG.